A 208-amino-acid chain; its full sequence is Uracil phosphoribosyltransferase (208 aa).

5-phospho-alpha-D-ribose 1-diphosphate contacts are provided by residues Arg-78, Arg-103, and 130–138; that span reads DPMLATGGS. Residues Ile-193 and 198 to 200 contribute to the uracil site; that span reads GDA. Residue Asp-199 participates in 5-phospho-alpha-D-ribose 1-diphosphate binding.

The protein belongs to the UPRTase family. It depends on Mg(2+) as a cofactor.

The catalysed reaction is UMP + diphosphate = 5-phospho-alpha-D-ribose 1-diphosphate + uracil. Its pathway is pyrimidine metabolism; UMP biosynthesis via salvage pathway; UMP from uracil: step 1/1. Its activity is regulated as follows. Allosterically activated by GTP. In terms of biological role, catalyzes the conversion of uracil and 5-phospho-alpha-D-ribose 1-diphosphate (PRPP) to UMP and diphosphate. The chain is Uracil phosphoribosyltransferase from Roseiflexus sp. (strain RS-1).